The primary structure comprises 245 residues: Phycocyanobilin:ferredoxin oxidoreductase (245 aa).

The protein belongs to the HY2 family.

The catalysed reaction is (2R,3Z)-phycocyanobilin + 4 oxidized [2Fe-2S]-[ferredoxin] = biliverdin IXalpha + 4 reduced [2Fe-2S]-[ferredoxin] + 4 H(+). Its function is as follows. Catalyzes the four-electron reduction of biliverdin IX-alpha (2-electron reduction at both the A and D rings); the reaction proceeds via an isolatable 2-electron intermediate, 181,182-dihydrobiliverdin. The chain is Phycocyanobilin:ferredoxin oxidoreductase from Trichodesmium erythraeum (strain IMS101).